Reading from the N-terminus, the 262-residue chain is Adenosylcobinamide-GDP ribazoletransferase (262 aa).

The next 4 membrane-spanning stretches (helical) occupy residues 43 to 63 (PLAG…LGAI), 121 to 141 (VALI…LPLL), 145 to 165 (GGGV…VWHW), and 195 to 215 (GVIL…AVLL).

Belongs to the CobS family. It depends on Mg(2+) as a cofactor.

The protein resides in the cell inner membrane. It carries out the reaction alpha-ribazole + adenosylcob(III)inamide-GDP = adenosylcob(III)alamin + GMP + H(+). The enzyme catalyses alpha-ribazole 5'-phosphate + adenosylcob(III)inamide-GDP = adenosylcob(III)alamin 5'-phosphate + GMP + H(+). The protein operates within cofactor biosynthesis; adenosylcobalamin biosynthesis; adenosylcobalamin from cob(II)yrinate a,c-diamide: step 7/7. Functionally, joins adenosylcobinamide-GDP and alpha-ribazole to generate adenosylcobalamin (Ado-cobalamin). Also synthesizes adenosylcobalamin 5'-phosphate from adenosylcobinamide-GDP and alpha-ribazole 5'-phosphate. The protein is Adenosylcobinamide-GDP ribazoletransferase of Sinorhizobium medicae (strain WSM419) (Ensifer medicae).